We begin with the raw amino-acid sequence, 403 residues long: Protein LAZ1 homolog 2 (403 aa).

6 consecutive transmembrane segments (helical) span residues 16 to 36 (SLII…YSIL), 50 to 70 (WIVS…ISLS), 162 to 182 (MILK…GVYG), 191 to 211 (GYPY…FCLV), 236 to 256 (IVFA…YGIL), and 269 to 289 (FLIC…FPAE). Positions 381-403 (SDGKEETEVTEEVTVETSVPPKE) are disordered.

This sequence belongs to the TMEM184 family.

Its subcellular location is the membrane. The sequence is that of Protein LAZ1 homolog 2 from Arabidopsis thaliana (Mouse-ear cress).